The sequence spans 442 residues: GTPase Der (442 aa).

EngA-type G domains lie at 2 to 167 and 175 to 351; these read RTIA…PIQN and FKFC…EQAM. GTP contacts are provided by residues 8 to 15, 55 to 59, 119 to 122, 181 to 188, 228 to 232, and 293 to 296; these read GKPNVGKS, DTGGI, NKVE, GRPNVGKS, DTAGV, and NKWD. In terms of domain architecture, KH-like spans 352-436; the sequence is RKVATSLLND…PITLYWQDKN (85 aa).

The protein belongs to the TRAFAC class TrmE-Era-EngA-EngB-Septin-like GTPase superfamily. EngA (Der) GTPase family. In terms of assembly, associates with the 50S ribosomal subunit.

Functionally, GTPase that plays an essential role in the late steps of ribosome biogenesis. The protein is GTPase Der of Ureaplasma urealyticum serovar 10 (strain ATCC 33699 / Western).